A 302-amino-acid chain; its full sequence is HTH-type transcriptional regulator GbpR (302 aa).

The region spanning 1 to 56 (MSHLRMLVMIEEHGQVSAAAAAMNMTQPAASRMLSEMEAIVKSPLCQRASRGVVLT) is the HTH lysR-type domain. The segment at residues 16–35 (VSAAAAAMNMTQPAASRMLS) is a DNA-binding region (H-T-H motif).

It belongs to the LysR transcriptional regulatory family.

Its function is as follows. Activator of the expression of chvE when bound to its inducer and represses its expression in the absence of inducer (L-arabinose, D-fucose or D-galactose). Negatively regulates its own expression. The sequence is that of HTH-type transcriptional regulator GbpR (gbpR) from Rhizobium radiobacter (Agrobacterium tumefaciens).